We begin with the raw amino-acid sequence, 447 residues long: Clusterin (447 aa).

The signal sequence occupies residues 1 to 22 (MKTLLLCVGLLLSWERGQVLGD). The short motif at 77 to 80 (KKNK) is the Nuclear localization signal element. Asparagine 85 and asparagine 102 each carry an N-linked (GlcNAc...) asparagine glycan. 5 disulfides stabilise this stretch: cysteine 101/cysteine 311, cysteine 112/cysteine 303, cysteine 115/cysteine 300, cysteine 120/cysteine 293, and cysteine 128/cysteine 283. Phosphoserine is present on serine 132. 5 N-linked (GlcNAc...) asparagine glycosylation sites follow: asparagine 144, asparagine 289, asparagine 326, asparagine 352, and asparagine 372. Position 394 is a phosphoserine (serine 394). The Nuclear localization signal motif lies at 441-445 (RKKKR).

Belongs to the clusterin family. Antiparallel disulfide-linked heterodimer of an alpha chain and a beta chain. Self-associates and forms higher oligomers. Interacts with a broad range of misfolded proteins, including APP, APOC2 and LYZ. Slightly acidic pH promotes interaction with misfolded proteins. Forms high-molecular weight oligomers upon interaction with misfolded proteins. Interacts with APOA1, LRP2, CLUAP1 and PON1. Interacts with the complement membrane attack complex. Interacts (via alpha chain) with XRCC6. Interacts with SYVN1, COMMD1, BTRC, CUL1 and with ubiquitin and SCF (SKP1-CUL1-F-box protein) E3 ubiquitin-protein ligase complexes. Interacts (via alpha chain) with BAX in stressed cells, where BAX undergoes a conformation change leading to association with the mitochondrial membrane. Does not interact with BAX in unstressed cells. Found in a complex with LTF, CLU, EPPIN and SEMG1. Interacts (immaturely glycosylated pre-secreted form) with HSPA5; this interaction promotes CLU stability and facilitates stress-induced CLU retrotranslocation from the secretory pathway to the mitochondria, thereby reducing stress-induced apoptosis by stabilizing mitochondrial membrane integrity. Interacts with BCL2L1; this interaction releases and activates BAX and promotes cell death. Interacts with TGFBR2 and ACVR1. Interacts (secreted form) with STMN3; this interaction may act as an important modulator during neuronal differentiation. Interacts with VLDLR and LRP8. Post-translationally, proteolytically cleaved on its way through the secretory system, probably within the Golgi lumen. Proteolytic cleavage is not necessary for its chaperone activity. All non-secreted forms are not proteolytically cleaved. Chaperone activity of uncleaved forms is dependent on a non-reducing environment. In terms of processing, polyubiquitinated, leading to proteasomal degradation. Under cellular stress, the intracellular level of cleaved form is reduced due to proteasomal degradation. Heavily N-glycosylated. About 30% of the protein mass is comprised of complex N-linked carbohydrate. Endoplasmic reticulum (ER) stress induces changes in glycosylation status and increases level of hypoglycosylated forms. Core carbohydrates are essential for chaperone activity. Non-secreted forms are hypoglycosylated or unglycosylated.

The protein localises to the secreted. Its subcellular location is the nucleus. The protein resides in the cytoplasm. It localises to the mitochondrion membrane. It is found in the cytosol. The protein localises to the microsome. Its subcellular location is the endoplasmic reticulum. The protein resides in the mitochondrion. It localises to the perinuclear region. It is found in the cytoplasmic vesicle. The protein localises to the secretory vesicle. Its subcellular location is the chromaffin granule. In terms of biological role, functions as extracellular chaperone that prevents aggregation of non native proteins. Prevents stress-induced aggregation of blood plasma proteins. Inhibits formation of amyloid fibrils by APP, APOC2, B2M, CALCA, CSN3, SNCA and aggregation-prone LYZ variants (in vitro). Does not require ATP. Maintains partially unfolded proteins in a state appropriate for subsequent refolding by other chaperones, such as HSPA8/HSC70. Does not refold proteins by itself. Binding to cell surface receptors triggers internalization of the chaperone-client complex and subsequent lysosomal or proteasomal degradation. When secreted, protects cells against apoptosis and against cytolysis by complement: inhibits assembly of the complement membrane attack complex (MAC) by preventing polymerization of C9 pore component of the MAC complex. Intracellular forms interact with ubiquitin and SCF (SKP1-CUL1-F-box protein) E3 ubiquitin-protein ligase complexes and promote the ubiquitination and subsequent proteasomal degradation of target proteins. Promotes proteasomal degradation of COMMD1 and IKBKB. Modulates NF-kappa-B transcriptional activity. Following stress, promotes apoptosis. Inhibits apoptosis when associated with the mitochondrial membrane by interference with BAX-dependent release of cytochrome c into the cytoplasm. Plays a role in the regulation of cell proliferation. An intracellular form suppresses stress-induced apoptosis by stabilizing mitochondrial membrane integrity through interaction with HSPA5. Secreted form does not affect caspase or BAX-mediated intrinsic apoptosis and TNF-induced NF-kappa-B-activity. Secreted form act as an important modulator during neuronal differentiation through interaction with STMN3. Plays a role in the clearance of immune complexes that arise during cell injury. The chain is Clusterin (CLU) from Oryctolagus cuniculus (Rabbit).